The primary structure comprises 62 residues: Mastoparan-AF (62 aa).

An N-terminal signal peptide occupies residues 1 to 25 (MKNTILILFTAFIALLGFFGMSAEA). AXPX repeat units follow at residues 25-28 (ADPI), 29-32 (ADPI), 33-36 (ADPI), and 43-46 (ADPE). A propeptide spanning residues 26–47 (DPIADPIADPISGPNAEADPEA) is cleaved from the precursor. Phenylalanine amide is present on Phe-61.

This sequence belongs to the MCD family. Mastoparan subfamily. As to expression, expressed by the venom gland.

Its subcellular location is the secreted. It localises to the target cell membrane. Functionally, antimicrobial and mast cell degranulating peptide. Has broad spectrum antibacterial activity against both Gram-positive and Gram-negative bacteria (S.aureus MIC=16-32 ug/ml, S.xylosus MIC=1.5 ug/ml, S.alactolyticus MIC=8 ug/ml, C.koseri MIC=4 ug/ml, E.coli MIC=4-32 ug/ml, K.pneumoniae MIC=32 ug/ml, P.aerugiosa MIC=96 ug/ml, S.choleraesuis MIC=16 ug/ml, S.typhimurium MIC=32 ug/ml, V.parahamelytics MIC=16 ug/ml). Is also active on multi-antibiotic resistant hemolytic E.coli O157:H7. Acts by affecting membrane permeability. On E.coli O157:H7, acts through multiple membrane disruption patterns, including large perforations (full opening) at apical ends (hollow tubes), vesicle budding, forming dents, and membrane corrugation and invagination leading to irregular pits or pores. Exerts 40% lower membrane permeabilization activities on E.coli O157:H7 than on the non-pathogen E.coli BL21. Shows little hemolytic activities on sheep, chicken and human erythrocytes, but with a higher activity on chicken erythrocytes. Its mast cell degranulation activity may be related to the activation of G-protein coupled receptors in mast cells as well as interaction with other proteins located in cell endosomal membranes in the mast cells. The chain is Mastoparan-AF from Vespa affinis (Lesser banded hornet).